The sequence spans 259 residues: AA9 family lytic polysaccharide monooxygenase E (259 aa).

Residues 1–20 form the signal peptide; that stretch reads MKATVLAGLAAVIAAQGVAG. Residues histidine 21 and histidine 99 each coordinate Cu(2+). Cysteine 69 and cysteine 193 are disulfide-bonded. O2 is bound by residues histidine 179 and glutamine 188. Residue tyrosine 190 coordinates Cu(2+).

It belongs to the polysaccharide monooxygenase AA9 family. Requires Cu(2+) as cofactor.

It localises to the secreted. It carries out the reaction [(1-&gt;4)-beta-D-glucosyl]n+m + reduced acceptor + O2 = 4-dehydro-beta-D-glucosyl-[(1-&gt;4)-beta-D-glucosyl]n-1 + [(1-&gt;4)-beta-D-glucosyl]m + acceptor + H2O.. Functionally, lytic polysaccharide monooxygenase (LPMO) that depolymerizes crystalline and amorphous polysaccharides via the oxidation of scissile alpha- or beta-(1-4)-glycosidic bonds, yielding C1 or C4 oxidation products. Catalysis by LPMOs requires the reduction of the active-site copper from Cu(II) to Cu(I) by a reducing agent and H(2)O(2) or O(2) as a cosubstrate. The chain is AA9 family lytic polysaccharide monooxygenase E from Malbranchea cinnamomea (Thermophilic fungus).